Consider the following 313-residue polypeptide: MALPIILDCDPGHDDAIALVLALASPELALKAVTSSAGNQTPDKTLRNVLRMLTLLNRTDIPVAGGARKPLMRDLIIADNVHGETGLDGPALPEPTFKPQACTAVELMVKVLRESDEPVTLVATGPQTNVALLLNSHPELHRKIARIVIMGGSMGLGNWTPAAEFNIFVDPEAAEIVFQSGLPIVMAGLDVTHRAQIMSADVERFRAIGNPVATTVAELLDFFMEYHKAEKWGFHGAPLHDPCTIAWLLKPELFTTVDRWVGVETQGKYTQGMTVVDYYSLTGNKPNTTLMVDIDRQGFVDLLAERLAQFSIR.

The active site involves H240.

It belongs to the IUNH family. RihA subfamily.

In terms of biological role, hydrolyzes cytidine or uridine to ribose and cytosine or uracil, respectively. This is Pyrimidine-specific ribonucleoside hydrolase RihA from Enterobacter sp. (strain 638).